A 335-amino-acid chain; its full sequence is Cytochrome c biogenesis protein CcsA (335 aa).

8 helical membrane passes run 15–35, 36–56, 68–88, 97–117, 142–162, 243–263, 278–298, and 304–324; these read FLLLFLTMLIYWAGAAFPNVT, WLPTLGTTGVAIANLCMATLL, LSNLYESLFFLAWGVTAIHLV, LVGVVTTPVAMGITAFAALSL, VMMLSYATLMVGSVLAIAFLV, IIGLGFPLLTIGIIAGAVWAN, WALITWLVFAAYLHARITKGW, and AILAASGFVVVWVCYLGVNLL.

It belongs to the CcmF/CycK/Ccl1/NrfE/CcsA family. As to quaternary structure, may interact with ccs1.

Its subcellular location is the cellular thylakoid membrane. Required during biogenesis of c-type cytochromes (cytochrome c6 and cytochrome f) at the step of heme attachment. The protein is Cytochrome c biogenesis protein CcsA of Crocosphaera subtropica (strain ATCC 51142 / BH68) (Cyanothece sp. (strain ATCC 51142)).